A 327-amino-acid chain; its full sequence is GMP reductase (327 aa).

Residue cysteine 176 is the Thioimidate intermediate of the active site. 205-228 (IIADGGIRTHGDIAKSIRFGASMV) provides a ligand contact to NADP(+).

Belongs to the IMPDH/GMPR family. GuaC type 2 subfamily.

The catalysed reaction is IMP + NH4(+) + NADP(+) = GMP + NADPH + 2 H(+). In terms of biological role, catalyzes the irreversible NADPH-dependent deamination of GMP to IMP. It functions in the conversion of nucleobase, nucleoside and nucleotide derivatives of G to A nucleotides, and in maintaining the intracellular balance of A and G nucleotides. The polypeptide is GMP reductase (Streptococcus agalactiae serotype III (strain NEM316)).